A 421-amino-acid chain; its full sequence is Glucan 1,3-beta-glucosidase (421 aa).

The N-terminal stretch at 1-15 is a signal peptide; that stretch reads MKLTKLVALAGAALA. Glu213 serves as the catalytic Proton donor. 2 cysteine pairs are disulfide-bonded: Cys296–Cys419 and Cys321–Cys347. Glu313 functions as the Nucleophile in the catalytic mechanism.

It belongs to the glycosyl hydrolase 5 (cellulase A) family.

It is found in the secreted. The enzyme catalyses Successive hydrolysis of beta-D-glucose units from the non-reducing ends of (1-&gt;3)-beta-D-glucans, releasing alpha-glucose.. The polypeptide is Glucan 1,3-beta-glucosidase (EXG1) (Yarrowia lipolytica (strain CLIB 122 / E 150) (Yeast)).